We begin with the raw amino-acid sequence, 213 residues long: C-type lectin domain family 4 member C (213 aa).

The Cytoplasmic portion of the chain corresponds to 1–21 (MVPEEEPQDREKGLWWFQLKV). Residues 22–44 (WSMAVVSILLLSVCFTVSSVVPH) traverse the membrane as a helical; Signal-anchor for type II membrane protein segment. The Extracellular segment spans residues 45 to 213 (NFMYSKTVKR…SICKMKKIYI (169 aa)). Intrachain disulfides connect C70–C82 and C83–C94. Positions 90–207 (FQSSCYFIST…CHVPQKSICK (118 aa)) constitute a C-type lectin domain. N-linked (GlcNAc...) asparagine glycans are attached at residues N110 and N137. 2 disulfide bridges follow: C111–C206 and C180–C198. S139 serves as a coordination point for a carbohydrate. N164 carries an N-linked (GlcNAc...) asparagine glycan. 3 residues coordinate Ca(2+): E172, N174, and E178. A carbohydrate is bound by residues E178, 184–186 (NFR), N194, 194–195 (ND), and Q202. Positions 194 and 195 each coordinate Ca(2+).

Homodimer. As to expression, expressed in plasmacytoid dendritic cells (PDCs). Constitutively expressed in immature monocyte-derived dendritic cells (iMDDC) and is significantly down-regulated upon maturation with LPS but not with TNF-alpha.

The protein localises to the cell membrane. Lectin-type cell surface receptor which may play a role in antigen capturing by dendritic cells. Specifically recognizes non-sialylated galactose-terminated biantennary glycans containing the trisaccharide epitope Gal(beta1-3/4)GlcNAc(beta1-2)Man. Binds to serum IgG. Efficiently targets ligand into antigen-processing and peptide-loading compartments for presentation to T-cells. May mediate potent inhibition of induction of IFN-alpha/beta expression in plasmacytoid dendritic cells. May act as a signaling receptor that activates protein-tyrosine kinases and mobilizes intracellular calcium. The polypeptide is C-type lectin domain family 4 member C (CLEC4C) (Homo sapiens (Human)).